The chain runs to 348 residues: Nicotinate-nucleotide--dimethylbenzimidazole phosphoribosyltransferase (348 aa).

Glu-315 functions as the Proton acceptor in the catalytic mechanism.

This sequence belongs to the CobT family.

It carries out the reaction 5,6-dimethylbenzimidazole + nicotinate beta-D-ribonucleotide = alpha-ribazole 5'-phosphate + nicotinate + H(+). Its pathway is nucleoside biosynthesis; alpha-ribazole biosynthesis; alpha-ribazole from 5,6-dimethylbenzimidazole: step 1/2. Functionally, catalyzes the synthesis of alpha-ribazole-5'-phosphate from nicotinate mononucleotide (NAMN) and 5,6-dimethylbenzimidazole (DMB). The chain is Nicotinate-nucleotide--dimethylbenzimidazole phosphoribosyltransferase from Dechloromonas aromatica (strain RCB).